The following is a 1072-amino-acid chain: Carbamoyl phosphate synthase large chain (1072 aa).

Positions 1–401 (MPKYKDINKV…SLLKAVRSLE (401 aa)) are carboxyphosphate synthetic domain. ATP is bound by residues Arg129, Arg169, Gly175, Gly176, Lys208, Leu210, Glu215, Gly241, Val242, His243, Gln284, and Glu298. The ATP-grasp 1 domain maps to 133-327 (KRKMQEIGEP…IAKIAAKIAI (195 aa)). Residues Gln284, Glu298, and Asn300 each coordinate Mg(2+). Residues Gln284, Glu298, and Asn300 each coordinate Mn(2+). Residues 402–544 (IKAYGLRLNN…YIYSTYGEED (143 aa)) form an oligomerization domain region. The interval 545–929 (EVEIHDMPKV…ALYKALEGAG (385 aa)) is carbamoyl phosphate synthetic domain. The ATP-grasp 2 domain occupies 671-861 (SKLLRELNIN…MVKLAVEVAL (191 aa)). Residues Arg707, Lys746, Ile748, Glu752, Gly777, Val778, His779, Ser780, Gln820, and Glu832 each contribute to the ATP site. Positions 820, 832, and 834 each coordinate Mg(2+). Mn(2+) contacts are provided by Gln820, Glu832, and Asn834. One can recognise an MGS-like domain in the interval 930 to 1072 (LKIPKKGKIL…QKDNVKNLVL (143 aa)). Residues 930–1072 (LKIPKKGKIL…QKDNVKNLVL (143 aa)) form an allosteric domain region.

This sequence belongs to the CarB family. As to quaternary structure, composed of two chains; the small (or glutamine) chain promotes the hydrolysis of glutamine to ammonia, which is used by the large (or ammonia) chain to synthesize carbamoyl phosphate. Tetramer of heterodimers (alpha,beta)4. The cofactor is Mg(2+). It depends on Mn(2+) as a cofactor.

It carries out the reaction hydrogencarbonate + L-glutamine + 2 ATP + H2O = carbamoyl phosphate + L-glutamate + 2 ADP + phosphate + 2 H(+). The enzyme catalyses hydrogencarbonate + NH4(+) + 2 ATP = carbamoyl phosphate + 2 ADP + phosphate + 2 H(+). It functions in the pathway amino-acid biosynthesis; L-arginine biosynthesis; carbamoyl phosphate from bicarbonate: step 1/1. Its pathway is pyrimidine metabolism; UMP biosynthesis via de novo pathway; (S)-dihydroorotate from bicarbonate: step 1/3. Its function is as follows. Large subunit of the glutamine-dependent carbamoyl phosphate synthetase (CPSase). CPSase catalyzes the formation of carbamoyl phosphate from the ammonia moiety of glutamine, carbonate, and phosphate donated by ATP, constituting the first step of 2 biosynthetic pathways, one leading to arginine and/or urea and the other to pyrimidine nucleotides. The large subunit (synthetase) binds the substrates ammonia (free or transferred from glutamine from the small subunit), hydrogencarbonate and ATP and carries out an ATP-coupled ligase reaction, activating hydrogencarbonate by forming carboxy phosphate which reacts with ammonia to form carbamoyl phosphate. This Thermoanaerobacter pseudethanolicus (strain ATCC 33223 / 39E) (Clostridium thermohydrosulfuricum) protein is Carbamoyl phosphate synthase large chain.